An 87-amino-acid chain; its full sequence is Large ribosomal subunit protein bL31B (87 aa).

This sequence belongs to the bacterial ribosomal protein bL31 family. Type B subfamily. In terms of assembly, part of the 50S ribosomal subunit.

The sequence is that of Large ribosomal subunit protein bL31B from Paraburkholderia phymatum (strain DSM 17167 / CIP 108236 / LMG 21445 / STM815) (Burkholderia phymatum).